Reading from the N-terminus, the 212-residue chain is Glycerol-3-phosphate acyltransferase (212 aa).

The next 5 membrane-spanning stretches (helical) occupy residues 3–23 (ILLAALVAYLIGSVSFAVVVS), 51–71 (KAAILTLVGDAFKGWLAVWLA), 78–98 (DVAVAWVAIAVFLGHLYPVFF), 115–135 (AVHPVLGLATALTWLIVAFFF), and 139–159 (SLAALVAAVFAPLFDVFLFGT).

Belongs to the PlsY family. In terms of assembly, probably interacts with PlsX.

The protein localises to the cell inner membrane. The enzyme catalyses an acyl phosphate + sn-glycerol 3-phosphate = a 1-acyl-sn-glycero-3-phosphate + phosphate. The protein operates within lipid metabolism; phospholipid metabolism. In terms of biological role, catalyzes the transfer of an acyl group from acyl-phosphate (acyl-PO(4)) to glycerol-3-phosphate (G3P) to form lysophosphatidic acid (LPA). This enzyme utilizes acyl-phosphate as fatty acyl donor, but not acyl-CoA or acyl-ACP. This is Glycerol-3-phosphate acyltransferase from Burkholderia ambifaria (strain MC40-6).